Here is a 438-residue protein sequence, read N- to C-terminus: Anthranilate synthase component 1 (438 aa).

L-tryptophan-binding positions include Ser45 and 220–222 (PYL). 255–256 (GT) is a binding site for chorismate. Glu282 serves as a coordination point for Mg(2+). Chorismate-binding positions include Tyr370, Arg389, 405-407 (GAG), and Gly407. Glu420 serves as a coordination point for Mg(2+).

It belongs to the anthranilate synthase component I family. In terms of assembly, heterotetramer consisting of two non-identical subunits: a beta subunit (TrpG) and a large alpha subunit (TrpE). It depends on Mg(2+) as a cofactor.

It carries out the reaction chorismate + L-glutamine = anthranilate + pyruvate + L-glutamate + H(+). It functions in the pathway amino-acid biosynthesis; L-tryptophan biosynthesis; L-tryptophan from chorismate: step 1/5. Feedback inhibited by tryptophan. Functionally, part of a heterotetrameric complex that catalyzes the two-step biosynthesis of anthranilate, an intermediate in the biosynthesis of L-tryptophan. In the first step, the glutamine-binding beta subunit (TrpG) of anthranilate synthase (AS) provides the glutamine amidotransferase activity which generates ammonia as a substrate that, along with chorismate, is used in the second step, catalyzed by the large alpha subunit of AS (TrpE) to produce anthranilate. In the absence of TrpG, TrpE can synthesize anthranilate directly from chorismate and high concentrations of ammonia. The protein is Anthranilate synthase component 1 (trpE) of Aeropyrum pernix (strain ATCC 700893 / DSM 11879 / JCM 9820 / NBRC 100138 / K1).